The sequence spans 246 residues: MNSATDSARPHDQIRPVEIECGYLESNPASVLYKSGKTIVLCTASVETNVPPWMEGRGKGWVTAEYNMLPGSTSPRKRRDRSGKVDGRTTEIQRLIGRSLRAIVDLHALGERSITVDCDVLQADGGTRTASITGGYIALSLAVSQLAAIPELDPPVDPTAVLRDSVAAISVGVIGEDVVLDLDYRLDSAADVDMNVIMTGSGRFIELQGTGEEATFDDVQLAELLRLGKIGIAELTKLQKAQLVTV.

The tract at residues 67–87 is disordered; it reads NMLPGSTSPRKRRDRSGKVDG. Phosphate contacts are provided by residues Arg-88 and 126 to 128; that span reads GTR.

The protein belongs to the RNase PH family. In terms of assembly, homohexameric ring arranged as a trimer of dimers.

It carries out the reaction tRNA(n+1) + phosphate = tRNA(n) + a ribonucleoside 5'-diphosphate. Its function is as follows. Phosphorolytic 3'-5' exoribonuclease that plays an important role in tRNA 3'-end maturation. Removes nucleotide residues following the 3'-CCA terminus of tRNAs; can also add nucleotides to the ends of RNA molecules by using nucleoside diphosphates as substrates, but this may not be physiologically important. Probably plays a role in initiation of 16S rRNA degradation (leading to ribosome degradation) during starvation. In Rhodopirellula baltica (strain DSM 10527 / NCIMB 13988 / SH1), this protein is Ribonuclease PH.